A 479-amino-acid polypeptide reads, in one-letter code: uncharacterized protein (479 aa).

10 helical membrane-spanning segments follow: residues 11-31 (ILMAIPLITFLLPAPDGLSLI), 43-63 (IVGLVLKPYGEPVILLAAIAV), 90-110 (GTTWLIFTAFTLSSAFVITGL), 151-171 (SGGIIFPIINSVVVALGSDPE), 195-215 (IFLTAMAPNALALSLMAPILG), 223-243 (WFLAASVPGLLCLFLIPLICY), 274-294 (KALSVLFVIALFGWIFSNSLH), 295-315 (INATIVAIIVMVLCIVLSIVT), 328-348 (TLVWYGGIIGMSGLLEKSGFF), and 447-467 (WWITGAIIAFGSLIIHLTIGM).

Belongs to the SLC13A/DASS transporter (TC 2.A.47) family. DIT1 subfamily.

The protein resides in the cell inner membrane. This is an uncharacterized protein from Haemophilus influenzae (strain ATCC 51907 / DSM 11121 / KW20 / Rd).